The chain runs to 338 residues: UPF0324 membrane protein HI_1643 (338 aa).

The next 10 membrane-spanning stretches (helical) occupy residues 5–23 (PFYF…ANYL), 33–55 (HISA…YPQF), 62–84 (GVLF…RLTF), 94–116 (AVVT…GIRY), 123–145 (LVYL…AEPV), 155–177 (VAIA…FYTW), 222–239 (LRVM…WLLT), 254–273 (IPWF…FDLL), 280–302 (LFVE…TTQA), and 312–334 (PLVL…NYGI).

The protein belongs to the UPF0324 family.

The protein localises to the cell membrane. This Haemophilus influenzae (strain ATCC 51907 / DSM 11121 / KW20 / Rd) protein is UPF0324 membrane protein HI_1643.